A 191-amino-acid chain; its full sequence is Inosine triphosphate pyrophosphatase (191 aa).

Thr-9 to Lys-14 contributes to the ITP binding site. Residue Glu-39 coordinates Mg(2+). ITP contacts are provided by residues Lys-51, Asp-67–Thr-68, Lys-84, Phe-143–Asp-146, Lys-166, and His-171–Arg-172.

The protein belongs to the HAM1 NTPase family. As to quaternary structure, homodimer. The cofactor is Mg(2+). It depends on Mn(2+) as a cofactor.

It is found in the cytoplasm. It carries out the reaction ITP + H2O = IMP + diphosphate + H(+). It catalyses the reaction dITP + H2O = dIMP + diphosphate + H(+). The catalysed reaction is XTP + H2O = XMP + diphosphate + H(+). Pyrophosphatase that hydrolyzes non-canonical purine nucleotides such as inosine triphosphate (ITP), deoxyinosine triphosphate (dITP) or xanthosine 5'-triphosphate (XTP) to their respective monophosphate derivatives. The enzyme does not distinguish between the deoxy- and ribose forms. Probably excludes non-canonical purines from RNA and DNA precursor pools, thus preventing their incorporation into RNA and DNA and avoiding chromosomal lesions. This chain is Inosine triphosphate pyrophosphatase, found in Drosophila melanogaster (Fruit fly).